The sequence spans 246 residues: Bis(5'-nucleosyl)-tetraphosphatase PrpE [asymmetrical] (246 aa).

This sequence belongs to the PrpE family. Ni(2+) serves as cofactor.

It catalyses the reaction P(1),P(4)-bis(5'-guanosyl) tetraphosphate + H2O = GMP + GTP + 2 H(+). Functionally, asymmetrically hydrolyzes Ap4p to yield AMP and ATP. The protein is Bis(5'-nucleosyl)-tetraphosphatase PrpE [asymmetrical] of Bacillus thuringiensis (strain Al Hakam).